Consider the following 300-residue polypeptide: Bifunctional protein FolD (300 aa).

Residues 168–170 (GRS), Ser193, and Ile234 contribute to the NADP(+) site.

The protein belongs to the tetrahydrofolate dehydrogenase/cyclohydrolase family. Homodimer.

It carries out the reaction (6R)-5,10-methylene-5,6,7,8-tetrahydrofolate + NADP(+) = (6R)-5,10-methenyltetrahydrofolate + NADPH. The catalysed reaction is (6R)-5,10-methenyltetrahydrofolate + H2O = (6R)-10-formyltetrahydrofolate + H(+). Its pathway is one-carbon metabolism; tetrahydrofolate interconversion. Its function is as follows. Catalyzes the oxidation of 5,10-methylenetetrahydrofolate to 5,10-methenyltetrahydrofolate and then the hydrolysis of 5,10-methenyltetrahydrofolate to 10-formyltetrahydrofolate. In Ehrlichia canis (strain Jake), this protein is Bifunctional protein FolD.